Consider the following 360-residue polypeptide: NAD(P)H-quinone oxidoreductase subunit 1, chloroplastic (360 aa).

A run of 8 helical transmembrane segments spans residues 30–50, 98–118, 127–147, 165–185, 203–223, 253–273, 297–317, and 340–360; these read FLPI…LVWL, FSIG…VIPF, FNIG…GLLM, AAQS…ISLL, FWGW…ISSL, FGLF…FVTV, IFGT…FLFI, and FLLP…VFSL.

The protein belongs to the complex I subunit 1 family. As to quaternary structure, NDH is composed of at least 16 different subunits, 5 of which are encoded in the nucleus.

It is found in the plastid. It localises to the chloroplast thylakoid membrane. It carries out the reaction a plastoquinone + NADH + (n+1) H(+)(in) = a plastoquinol + NAD(+) + n H(+)(out). It catalyses the reaction a plastoquinone + NADPH + (n+1) H(+)(in) = a plastoquinol + NADP(+) + n H(+)(out). Functionally, NDH shuttles electrons from NAD(P)H:plastoquinone, via FMN and iron-sulfur (Fe-S) centers, to quinones in the photosynthetic chain and possibly in a chloroplast respiratory chain. The immediate electron acceptor for the enzyme in this species is believed to be plastoquinone. Couples the redox reaction to proton translocation, and thus conserves the redox energy in a proton gradient. The sequence is that of NAD(P)H-quinone oxidoreductase subunit 1, chloroplastic from Aethionema cordifolium (Lebanon stonecress).